A 98-amino-acid polypeptide reads, in one-letter code: Beta-2-microglobulin (98 aa).

In terms of domain architecture, Ig-like C1-type spans 4 to 92 (PKVQVYSRFP…HETLKEPQVY (89 aa)). A disulfide bridge links Cys24 with Cys79.

It belongs to the beta-2-microglobulin family. In terms of assembly, heterodimer of an alpha chain and a beta chain. Beta-2-microglobulin is the beta-chain of major histocompatibility complex class I molecules.

It is found in the secreted. Functionally, component of the class I major histocompatibility complex (MHC). Involved in the presentation of peptide antigens to the immune system. The protein is Beta-2-microglobulin (B2M) of Meleagris gallopavo (Wild turkey).